Consider the following 1093-residue polypeptide: Probable phosphorylase b kinase regulatory subunit beta (1093 aa).

Residues 1–27 are disordered; it reads MRDVPKSLGLSVTTPGGSSGAPDSGRH. Calmodulin-binding stretches follow at residues 6 to 27, 751 to 778, and 905 to 936; these read KSLGLSVTTPGGSSGAPDSGRH, QLYHRAGSLRYWRAVRYCSSLLHHIVDS, and EKLTTLQRRQLEGCLCRVPKHFYNKIWEILQR. Residue cysteine 1090 is the site of S-farnesyl cysteine attachment.

Belongs to the phosphorylase b kinase regulatory chain family. Although the final Cys may be farnesylated, the terminal tripeptide is probably not removed, and the C-terminus is not methylated.

Its subcellular location is the cell membrane. It participates in glycan biosynthesis; glycogen metabolism. Its function is as follows. Phosphorylase b kinase catalyzes the phosphorylation of serine in certain substrates, including troponin I. The beta chain acts as a regulatory unit and modulates the activity of the holoenzyme in response to phosphorylation. The chain is Probable phosphorylase b kinase regulatory subunit beta from Drosophila melanogaster (Fruit fly).